The primary structure comprises 234 residues: MRLVQLSRHSIAFPSPEGALREPNGLLALGGDLSPARLLMAYQRGIFPWFSPGAPILWWSPDPRAVLWPESLHISRSMKRFHKRSPYRVTMNYAFGQVIEGCASDREEGTWITRGVVEAYHRLHELGHAHSIEVWHEDELVGGMYGVAQGTLFCGESMFSRMENASKTALLVFCEEFISHGGKLIDCQVLNDHTASLGACEIPRRDYLNYLNQMRLGRLPNNFWVPRCLFSPQK.

Belongs to the L/F-transferase family.

The protein localises to the cytoplasm. The catalysed reaction is N-terminal L-lysyl-[protein] + L-leucyl-tRNA(Leu) = N-terminal L-leucyl-L-lysyl-[protein] + tRNA(Leu) + H(+). It catalyses the reaction N-terminal L-arginyl-[protein] + L-leucyl-tRNA(Leu) = N-terminal L-leucyl-L-arginyl-[protein] + tRNA(Leu) + H(+). It carries out the reaction L-phenylalanyl-tRNA(Phe) + an N-terminal L-alpha-aminoacyl-[protein] = an N-terminal L-phenylalanyl-L-alpha-aminoacyl-[protein] + tRNA(Phe). Functionally, functions in the N-end rule pathway of protein degradation where it conjugates Leu, Phe and, less efficiently, Met from aminoacyl-tRNAs to the N-termini of proteins containing an N-terminal arginine or lysine. The chain is Leucyl/phenylalanyl-tRNA--protein transferase from Shigella sonnei (strain Ss046).